The chain runs to 244 residues: Putative ribosomal recycling factor, mitochondrial (244 aa).

The protein belongs to the RRF family.

It localises to the mitochondrion. Functionally, necessary for protein synthesis in mitochondria. Functions as a ribosome recycling factor in mitochondria. The polypeptide is Putative ribosomal recycling factor, mitochondrial (rrf1) (Schizosaccharomyces pombe (strain 972 / ATCC 24843) (Fission yeast)).